The following is a 118-amino-acid chain: Large ribosomal subunit protein bL20 (118 aa).

The protein belongs to the bacterial ribosomal protein bL20 family.

Functionally, binds directly to 23S ribosomal RNA and is necessary for the in vitro assembly process of the 50S ribosomal subunit. It is not involved in the protein synthesizing functions of that subunit. The sequence is that of Large ribosomal subunit protein bL20 from Fervidobacterium nodosum (strain ATCC 35602 / DSM 5306 / Rt17-B1).